The sequence spans 179 residues: Apolipophorin-3b (179 aa).

An N-terminal signal peptide occupies residues 1 to 16; that stretch reads MNTLLAVLMLAVAAQA. 12 consecutive repeats follow at residues 30–40, 41–52, 53–60, 61–78, 79–89, 90–99, 100–113, 114–127, 128–140, 141–151, 152–165, and 166–179; these read VQQLNHTIVNA, AHELHETLGLPT, PDEALNLL, TEQANAFKTKIAEVTTSL, KQEAEKHQGSV, AEQLNRFARN, LNNSIHDAATSAQP, ADQLNSLQSALTNV, GHQWQTSQPRPSV, AQEAWAPVQSA, LQEAAEKTKEAAAN, and LQNSIQSAVQKPAN. N34 carries an N-linked (GlcNAc...) asparagine glycan. N-linked (GlcNAc...) asparagine glycosylation occurs at N101. Residues 152–179 are disordered; the sequence is LQEAAEKTKEAAANLQNSIQSAVQKPAN. Residues 165–179 are compositionally biased toward polar residues; that stretch reads NLQNSIQSAVQKPAN.

It belongs to the insect apolipophorin-3 family. As to quaternary structure, equilibrium between a soluble monomer and a bound lipoprotein form. Apolipophorin-3 associates with lipophorin during lipid loading until each particle contains 14 molecules of apolipophorin-3 in L.migratoria (5 molecules of apolipophorin-3a and 9 of apolipophorin-3b). Hemolymph.

Its subcellular location is the secreted. Its function is as follows. Assists in the loading of diacylglycerol, generated from triacylglycerol stores in the fat body through the action of adipokinetic hormone, into lipophorin, the hemolymph lipoprotein. It increases the lipid carrying capacity of lipophorin by covering the expanding hydrophobic surface resulting from diacylglycerol uptake. It thus plays a critical role in the transport of lipids during flight in several species of insects. In Locusta migratoria (Migratory locust), this protein is Apolipophorin-3b.